A 170-amino-acid polypeptide reads, in one-letter code: Peptide methionine sulfoxide reductase MsrA (170 aa).

The active site involves Cys-14.

It belongs to the MsrA Met sulfoxide reductase family.

It carries out the reaction L-methionyl-[protein] + [thioredoxin]-disulfide + H2O = L-methionyl-(S)-S-oxide-[protein] + [thioredoxin]-dithiol. The enzyme catalyses [thioredoxin]-disulfide + L-methionine + H2O = L-methionine (S)-S-oxide + [thioredoxin]-dithiol. Its function is as follows. Has an important function as a repair enzyme for proteins that have been inactivated by oxidation. Catalyzes the reversible oxidation-reduction of methionine sulfoxide in proteins to methionine. The protein is Peptide methionine sulfoxide reductase MsrA of Streptomyces avermitilis (strain ATCC 31267 / DSM 46492 / JCM 5070 / NBRC 14893 / NCIMB 12804 / NRRL 8165 / MA-4680).